Reading from the N-terminus, the 318-residue chain is DNA repair nuclease/redox regulator APEX1 (318 aa).

The tract at residues 1-33 (MPKRGKKGAVAEDGDELKTEPEAKKSKTAAKKN) is necessary for interaction with YBX1, binding to RNA, association together with NPM1 to rRNA, endoribonuclease activity on abasic RNA and localization in the nucleoli. A disordered region spans residues 1–60 (MPKRGKKGAVAEDGDELKTEPEAKKSKTAAKKNDKEAAGEGPALYEDPPDQKTSPSGKPA). Residues Lys-6 and Lys-7 each carry the N6-acetyllysine; by EP300 modification. A Nuclear localization signal (NLS) motif is present at residues 8–13 (GAVAED). A compositionally biased stretch (basic and acidic residues) spans 16-38 (ELKTEPEAKKSKTAAKKNDKEAA). Positions 23-33 (AKKSKTAAKKN) are necessary for interaction with NPM1 and for efficient rRNA binding. N6-acetyllysine occurs at positions 27, 31, 32, and 35. A Phosphoserine modification is found at Ser-54. The Nuclear export signal (NES) motif lies at 64–80 (ICSWNVDGLRAWIKKKG). Cys-65 carries the post-translational modification S-nitrosocysteine; alternate. Cys-65 and Cys-93 are oxidised to a cystine. Asp-70 provides a ligand contact to Mg(2+). Cys-93 carries the S-nitrosocysteine; alternate modification. Residue Glu-96 participates in Mg(2+) binding. Residue Tyr-171 is part of the active site. N6-acetyllysine is present on Lys-197. Mg(2+)-binding residues include Asp-210 and Asn-212. Residue Asp-210 is the Proton donor/acceptor of the active site. Thr-233 bears the Phosphothreonine; by CDK5 mark. The mitochondrial targeting sequence (MTS) stretch occupies residues 289–318 (HSLLPALCDSKIRSKALGSDHCPITLYLAL). Mg(2+) is bound at residue Asp-308. The residue at position 310 (Cys-310) is an S-nitrosocysteine.

This sequence belongs to the DNA repair enzymes AP/ExoA family. As to quaternary structure, monomer. Homodimer; disulfide-linked. Component of the SET complex, composed of at least APEX1, SET, ANP32A, HMGB2, NME1 and TREX1. Associates with the dimer XRCC5/XRCC6 in a DNA-dependent manner. Interacts with SIRT1; the interaction is increased in the context of genotoxic stress. Interacts with HDAC1, HDAC2 and HDAC3; the interactions are not dependent on the APEX1 acetylation status. Interacts with XRCC1; the interaction is induced by SIRT1 and increased with the APEX1 acetylated form. Interacts with NPM1 (via N-terminal domain); the interaction is RNA-dependent and decreases in hydrogen peroxide-damaged cells. Interacts (via N-terminus) with YBX1 (via C-terminus); the interaction is increased in presence of APEX1 acetylated at Lys-6 and Lys-7. Interacts with HNRNPL; the interaction is DNA-dependent. Interacts (via N-terminus) with KPNA1 and KPNA2. Interacts with TXN; the interaction stimulates the FOS/JUN AP-1 complex DNA-binding activity in a redox-dependent manner. Interacts with GZMA, KRT8, MDM2, POLB, PRDX6, PRPF19, RPLP0, TOMM20 and WDR77. Binds to CDK5. Requires Mg(2+) as cofactor. The cofactor is Mn(2+). Post-translationally, phosphorylated. Phosphorylation by kinase PKC or casein kinase CK2 results in enhanced redox activity that stimulates binding of the FOS/JUN AP-1 complex to its cognate binding site. AP-endodeoxyribonuclease activity is not affected by CK2-mediated phosphorylation. Phosphorylation of Thr-233 by CDK5 in response to MPP(+)/MPTP (1-methyl-4-phenylpyridinium) reduces AP-endodeoxyribonuclease activity resulting in accumulation of DNA damage and contributing to neuronal death. Acetylated on Lys-6 and Lys-7. Acetylation is increased by the transcriptional coactivator EP300 acetyltransferase, genotoxic agents like H(2)O(2) and methyl methanesulfonate (MMS). Acetylation increases its binding affinity to the negative calcium response element (nCaRE) DNA promoter. The acetylated form induces a stronger binding of YBX1 to the Y-box sequence in the MDR1 promoter than the unacetylated form. Deacetylated on lysines. Lys-6 and Lys-7 are deacetylated by SIRT1. In terms of processing, cleaved at Lys-31 by granzyme A to create the mitochondrial form; leading in reduction of binding to DNA, AP endodeoxyribonuclease activity, redox activation of transcription factors and to enhanced cell death. Cleaved by granzyme K; leading to intracellular ROS accumulation and enhanced cell death after oxidative stress. Post-translationally, cys-69 and Cys-93 are nitrosylated in response to nitric oxide (NO) and lead to the exposure of the nuclear export signal (NES). Ubiquitinated by MDM2; leading to translocation to the cytoplasm and proteasomal degradation.

The protein resides in the nucleus. Its subcellular location is the nucleolus. It is found in the nucleus speckle. It localises to the endoplasmic reticulum. The protein localises to the cytoplasm. The protein resides in the mitochondrion. The enzyme catalyses Exonucleolytic cleavage in the 3'- to 5'-direction to yield nucleoside 5'-phosphates.. With respect to regulation, NPM1 stimulates endodeoxyribonuclease activity on double-stranded DNA with AP sites, but inhibits endoribonuclease activity on single-stranded RNA containing AP sites. In terms of biological role, multifunctional protein that plays a central role in the cellular response to oxidative stress. The two major activities of APEX1 are DNA repair and redox regulation of transcriptional factors. Functions as an apurinic/apyrimidinic (AP) endodeoxyribonuclease in the DNA base excision repair (BER) pathway of DNA lesions induced by oxidative and alkylating agents. Initiates repair of AP sites in DNA by catalyzing hydrolytic incision of the phosphodiester backbone immediately adjacent to the damage, generating a single-strand break with 5'-deoxyribose phosphate and 3'-hydroxyl ends. Also incises at AP sites in the DNA strand of DNA/RNA hybrids, single-stranded DNA regions of R-loop structures, and single-stranded RNA molecules. Has 3'-5' exoribonuclease activity on mismatched deoxyribonucleotides at the 3' termini of nicked or gapped DNA molecules during short-patch BER. Possesses DNA 3' phosphodiesterase activity capable of removing lesions (such as phosphoglycolate) blocking the 3' side of DNA strand breaks. May also play a role in the epigenetic regulation of gene expression by participating in DNA demethylation. Acts as a loading factor for POLB onto non-incised AP sites in DNA and stimulates the 5'-terminal deoxyribose 5'-phosphate (dRp) excision activity of POLB. Plays a role in the protection from granzyme-mediated cellular repair leading to cell death. Also involved in the DNA cleavage step of class switch recombination (CSR). On the other hand, APEX1 also exerts reversible nuclear redox activity to regulate DNA binding affinity and transcriptional activity of transcriptional factors by controlling the redox status of their DNA-binding domain, such as the FOS/JUN AP-1 complex after exposure to IR. Involved in calcium-dependent down-regulation of parathyroid hormone (PTH) expression by binding to negative calcium response elements (nCaREs). Together with HNRNPL or the dimer XRCC5/XRCC6, associates with nCaRE, acting as an activator of transcriptional repression. Stimulates the YBX1-mediated MDR1 promoter activity, when acetylated at Lys-6 and Lys-7, leading to drug resistance. Also acts as an endoribonuclease involved in the control of single-stranded RNA metabolism. Plays a role in regulating MYC mRNA turnover by preferentially cleaving in between UA and CA dinucleotides of the MYC coding region determinant (CRD). In association with NMD1, plays a role in the rRNA quality control process during cell cycle progression. Associates, together with YBX1, on the MDR1 promoter. Together with NPM1, associates with rRNA. Binds DNA and RNA. The protein is DNA repair nuclease/redox regulator APEX1 (APEX1) of Gorilla gorilla gorilla (Western lowland gorilla).